Reading from the N-terminus, the 627-residue chain is Serine/threonine-protein phosphatase 2A 56 kDa regulatory subunit delta 2 isoform (627 aa).

The interval 1-37 (MKGLRSKFVKALSLKDEQGSHKNGHSKSHYISKNGSY) is disordered.

The protein belongs to the phosphatase 2A regulatory subunit B family. In terms of assembly, PP2A consists of a common heterodimeric core enzyme, composed of a 36 kDa catalytic subunit (subunit C) and a 65 kDa constant regulatory subunit (PR65 or subunit A), that associates with a variety of regulatory subunits. Proteins that associate with the core dimer include three families of regulatory subunits B (the R2/B/PR55/B55, R3/B''/PR72/PR130/PR59 and R5/B'/B56 families), the 48 kDa variable regulatory subunit, viral proteins, and cell signaling molecules.

Its subcellular location is the cytoplasm. The protein localises to the cell tip. Functionally, the B regulatory subunit might modulate substrate selectivity and catalytic activity, and might also direct the localization of the catalytic enzyme to a particular subcellular compartment. Has a role in cell shape control and septum formation. This is Serine/threonine-protein phosphatase 2A 56 kDa regulatory subunit delta 2 isoform (par2) from Schizosaccharomyces pombe (strain 972 / ATCC 24843) (Fission yeast).